Consider the following 824-residue polypeptide: Translation initiation factor IF-2 (824 aa).

A disordered region spans residues 1–234 (MSDQDGKKPL…RQKAMGGSVD (234 aa)). 2 stretches are compositionally biased toward basic and acidic residues: residues 59–75 (GGKR…DRRL) and 82–144 (KARE…RRNA). Residues 145–159 (PPEAAAPAVDPAAAA) show a composition bias toward low complexity. The span at 170–186 (ARREPERDNKRENRSRG) shows a compositional bias: basic and acidic residues. The tr-type G domain occupies 321 to 491 (PRPPVITIMG…ALQAELLELK (171 aa)). Residues 330 to 337 (GHVDHGKT) form a G1 region. 330 to 337 (GHVDHGKT) lines the GTP pocket. A G2 region spans residues 355-359 (GITQH). The interval 377-380 (DTPG) is G3. GTP contacts are provided by residues 377–381 (DTPGH) and 431–434 (NKID). Residues 431–434 (NKID) form a G4 region. Residues 467 to 469 (SAM) are G5.

The protein belongs to the TRAFAC class translation factor GTPase superfamily. Classic translation factor GTPase family. IF-2 subfamily.

It is found in the cytoplasm. In terms of biological role, one of the essential components for the initiation of protein synthesis. Protects formylmethionyl-tRNA from spontaneous hydrolysis and promotes its binding to the 30S ribosomal subunits. Also involved in the hydrolysis of GTP during the formation of the 70S ribosomal complex. This is Translation initiation factor IF-2 from Jannaschia sp. (strain CCS1).